The sequence spans 470 residues: Asparagine--tRNA ligase (470 aa).

The protein belongs to the class-II aminoacyl-tRNA synthetase family. Homodimer.

Its subcellular location is the cytoplasm. It catalyses the reaction tRNA(Asn) + L-asparagine + ATP = L-asparaginyl-tRNA(Asn) + AMP + diphosphate + H(+). This Blochmanniella floridana protein is Asparagine--tRNA ligase.